The sequence spans 255 residues: Indole-3-glycerol phosphate synthase (255 aa).

This sequence belongs to the TrpC family.

It catalyses the reaction 1-(2-carboxyphenylamino)-1-deoxy-D-ribulose 5-phosphate + H(+) = (1S,2R)-1-C-(indol-3-yl)glycerol 3-phosphate + CO2 + H2O. Its pathway is amino-acid biosynthesis; L-tryptophan biosynthesis; L-tryptophan from chorismate: step 4/5. The sequence is that of Indole-3-glycerol phosphate synthase from Streptococcus thermophilus (strain ATCC BAA-250 / LMG 18311).